The following is a 473-amino-acid chain: DNA (cytosine-5)-methyltransferase DRM1A (473 aa).

In terms of domain architecture, UBA 1 spans 20-61; it reads SAPSALVAYFLGMGFSREMVFRAIKEIGDTDSEQILELLLTY. The segment covering 84–101 has biased composition (acidic residues); the sequence is EEEDEEEDVNWDEDDTVD. The disordered stretch occupies residues 84-115; the sequence is EEEDEEEDVNWDEDDTVDNFDRATYSDGSGDE. Residues 120-140 form the UBA 2 domain; sequence EMSEKDEKIKSLVSMGFPEDE. One can recognise an SAM-dependent MTase DRM-type domain in the interval 204–431; that stretch reads VHRNLPDQAL…DSVKTIMASI (228 aa).

It belongs to the class I-like SAM-binding methyltransferase superfamily. DRM-methyltransferase family.

It localises to the nucleus. It carries out the reaction a 2'-deoxycytidine in DNA + S-adenosyl-L-methionine = a 5-methyl-2'-deoxycytidine in DNA + S-adenosyl-L-homocysteine + H(+). Its function is as follows. Involved in de novo DNA methylation. Involved in RNA-directed DNA methylation (RdDM). In Oryza sativa subsp. japonica (Rice), this protein is DNA (cytosine-5)-methyltransferase DRM1A.